Here is a 253-residue protein sequence, read N- to C-terminus: Beta-crystallin B1 (253 aa).

Over residues 1–18 the composition is skewed to low complexity; sequence MSQPAAKASATAAVNPGP. Residues 1–53 form a disordered region; sequence MSQPAAKASATAAVNPGPDGKGKAGPPPGPAPGSGPAPAPAPAPAQPAPAAKA. Serine 2 carries the post-translational modification N-acetylserine. Residues 2-59 form an N-terminal arm region; sequence SQPAAKASATAAVNPGPDGKGKAGPPPGPAPGSGPAPAPAPAPAQPAPAAKAELPPGS. Over residues 25–47 the composition is skewed to pro residues; the sequence is GPPPGPAPGSGPAPAPAPAPAQP. Beta/gamma crystallin 'Greek key' domains follow at residues 60 to 99 and 100 to 144; these read YKLVVFEQENFQGRRVEFSGECLNLGDRGFERVRSIIVTS and GPWV…RPIK. Residues 145–149 are connecting peptide; it reads MDAQE. 2 Beta/gamma crystallin 'Greek key' domains span residues 150–191 and 192–234; these read HKLC…RVSS and GTWV…RRLR. The segment at 236–253 is C-terminal arm; that stretch reads RQWHREGCFPVLAAEPPK.

This sequence belongs to the beta/gamma-crystallin family. As to quaternary structure, homo/heterodimer, or complexes of higher-order. The structure of beta-crystallin oligomers seems to be stabilized through interactions between the N-terminal arms. Specific cleavages in the N-terminal arm occur during lens maturation and give rise to truncated forms, leading to impaired oligomerization and protein insolubilization.

In terms of biological role, crystallins are the dominant structural components of the vertebrate eye lens. This is Beta-crystallin B1 (CRYBB1) from Bos taurus (Bovine).